The sequence spans 366 residues: Homer protein homolog 1 (366 aa).

In terms of domain architecture, WH1 spans 1-110; the sequence is MGEQPIFSTR…EKFQEFKEAA (110 aa). Gly2 carries the N-acetylglycine modification. The tract at residues 114–189 is disordered; that stretch reads KEKSQEKMEL…RTQGLSHASS (76 aa). The segment covering 138-147 has biased composition (polar residues); sequence SPLTPESING. Positions 193–364 form a coiled coil; it reads KHWEAELATL…LRDNLAKLLE (172 aa). A required for tetramerization region spans residues 302-366; it reads KLQEVEIRNK…DNLAKLLECS (65 aa). Ser318 carries the phosphoserine modification.

Belongs to the Homer family. Tetramer; this tetrameric structure is critical for forming the high-order complex with SHANK1, which in turn is necessary for the structural and functional integrity of dendritic spines. Interacts with GRM1, GRM5, ITPR1, DYN3, RYR1, RYR2 and SHANK3. Interacts with IFT57 and OPHN1. Isoform 1 and isoform 2 encode coiled-coil structures that mediate homo- and heteromultimerization. Interacts with SHANK1; forms high-order polymerized complex with a mesh-like network structure, at least composed of SHANK1, HOMER1 and DLGAP1; the complex formation is SHANK1 multimerization dependent. Interacts with NFATC4. Interacts with DAGLA (via PPXXF motif); this interaction is required for the cell membrane localization of DAGLA. Interacts with SRGAP2. In terms of tissue distribution, highly expressed in cortex, Purkinje cells of the cerebellum, hippocampus, striatum and olfactory bulb. Isoform 1 and isoform 3 are expressed in skeletal and cardiac muscle.

It is found in the cytoplasm. The protein localises to the postsynaptic density. It localises to the synapse. The protein resides in the cell projection. Its subcellular location is the dendritic spine. Postsynaptic density scaffolding protein. Binds and cross-links cytoplasmic regions of GRM1, GRM5, ITPR1, DNM3, RYR1, RYR2, SHANK1 and SHANK3. By physically linking GRM1 and GRM5 with ER-associated ITPR1 receptors, it aids the coupling of surface receptors to intracellular calcium release. May also couple GRM1 to PI3 kinase through its interaction with AGAP2. Differentially regulates the functions of the calcium activated channel ryanodine receptors RYR1 and RYR2. Isoform 1 decreases the activity of RYR2, and increases the activity of RYR1, whereas isoform 3 counteracts the effects by competing for binding sites. Isoform 1 regulates the trafficking and surface expression of GRM5. Isoform 3 acts as a natural dominant negative, in dynamic competition with constitutively expressed isoform 1, and isoform 2 to regulate synaptic metabotropic glutamate function. Isoform 3, may be involved in the structural changes that occur at synapses during long-lasting neuronal plasticity and development. Forms a high-order complex with SHANK1, which in turn is necessary for the structural and functional integrity of dendritic spines. Negatively regulates T cell activation by inhibiting the calcineurin-NFAT pathway. Acts by competing with calcineurin/PPP3CA for NFAT protein binding, hence preventing NFAT activation by PPP3CA. This Rattus norvegicus (Rat) protein is Homer protein homolog 1.